The sequence spans 214 residues: Melanoregulin (214 aa).

Residues 162–172 (LSERYLFVVDR) carry the Cholesterol-binding sequence motif motif. Ser-213 bears the Phosphoserine mark.

The protein belongs to the melanoregulin family. Identified in a complex with RILP and DCTN1; interacts directly with RILP, but does not interact directly with DCTN1. Interacts with PRPH2. Post-translationally, palmitoylated. Palmitoylation is required to maintain the protein at the melanosome membrane. Expressed in photoreceptor cells (at protein level).

It is found in the apical cell membrane. Its subcellular location is the melanosome membrane. The protein resides in the lysosome membrane. The protein localises to the cytoplasmic vesicle membrane. Functionally, probably functions as a cargo-recognition protein that couples cytoplasmic vesicles to the transport machinery. Plays a role in hair pigmentation, a process that involves shedding of melanosome-containing vesicles from melanocytes, followed by phagocytosis of the melanosome-containing vesicles by keratinocytes. Functions on melanosomes as receptor for RILP and the complex formed by RILP and DCTN1, and thereby contributes to retrograde melanosome transport from the cell periphery to the center. Overexpression causes accumulation of late endosomes and/or lysosomes at the microtubule organising center (MTOC) at the center of the cell. Probably binds cholesterol and requires the presence of cholesterol in membranes to function in microtubule-mediated retrograde organelle transport. Binds phosphatidylinositol 3-phosphate, phosphatidylinositol 4-phosphate, phosphatidylinositol 5-phosphate and phosphatidylinositol 3,5-bisphosphate, but not phosphatidylinositol 3,4-bisphosphate or phosphatidylinositol 4,5-bisphosphate. Required for normal phagosome clearing and normal activation of lysosomal enzymes in lysosomes from retinal pigment epithelium cells. Required for normal degradation of the lipofuscin component N-retinylidene-N-retinylethanolamine (A2E) in the eye. May function in membrane fusion and regulate the biogenesis of disk membranes of photoreceptor rod cells. The polypeptide is Melanoregulin (MREG) (Homo sapiens (Human)).